Reading from the N-terminus, the 220-residue chain is Ribosomal RNA large subunit methyltransferase E (220 aa).

Residues Gly-60, Trp-62, Asp-92, Asp-108, and Asp-133 each coordinate S-adenosyl-L-methionine. The active-site Proton acceptor is the Lys-173. The disordered stretch occupies residues 198–220; the sequence is KPKASRDKSSETFILGRQLKHPR.

The protein belongs to the class I-like SAM-binding methyltransferase superfamily. RNA methyltransferase RlmE family.

It localises to the cytoplasm. It catalyses the reaction uridine(2552) in 23S rRNA + S-adenosyl-L-methionine = 2'-O-methyluridine(2552) in 23S rRNA + S-adenosyl-L-homocysteine + H(+). Functionally, specifically methylates the uridine in position 2552 of 23S rRNA at the 2'-O position of the ribose in the fully assembled 50S ribosomal subunit. This Burkholderia cenocepacia (strain HI2424) protein is Ribosomal RNA large subunit methyltransferase E.